Consider the following 216-residue polypeptide: Large ribosomal subunit protein uL3 (216 aa).

Disordered stretches follow at residues 89-108 (QRAS…VGGF) and 139-158 (NTHG…QCQS). Q157 carries the post-translational modification N5-methylglutamine.

It belongs to the universal ribosomal protein uL3 family. Part of the 50S ribosomal subunit. Forms a cluster with proteins L14 and L19. In terms of processing, methylated by PrmB.

Its function is as follows. One of the primary rRNA binding proteins, it binds directly near the 3'-end of the 23S rRNA, where it nucleates assembly of the 50S subunit. The sequence is that of Large ribosomal subunit protein uL3 from Halorhodospira halophila (strain DSM 244 / SL1) (Ectothiorhodospira halophila (strain DSM 244 / SL1)).